The chain runs to 194 residues: MTIKLIVGLANPGAEYAATRHNAGAWYVDLLAERLRAPLREEPKFFGYTSRVTLEGEDVRLLVPTTFMNLSGKAVGAMASFYRIMPDEILVAHDELDLPPGVAKFKLGGGHGGHNGLKDIINKLGNNPNFHRLRVGIGHPGDKNKVVGFVLGKPPVSEQKLIDDAIDEAARCTEVWFKEGLTKATNRLHAFKAQ.

Tyr16 is a binding site for tRNA. Catalysis depends on His21, which acts as the Proton acceptor. TRNA contacts are provided by Phe67, Asn69, and Asn115.

It belongs to the PTH family. In terms of assembly, monomer.

The protein localises to the cytoplasm. It catalyses the reaction an N-acyl-L-alpha-aminoacyl-tRNA + H2O = an N-acyl-L-amino acid + a tRNA + H(+). Its function is as follows. Hydrolyzes ribosome-free peptidyl-tRNAs (with 1 or more amino acids incorporated), which drop off the ribosome during protein synthesis, or as a result of ribosome stalling. Catalyzes the release of premature peptidyl moieties from peptidyl-tRNA molecules trapped in stalled 50S ribosomal subunits, and thus maintains levels of free tRNAs and 50S ribosomes. The protein is Peptidyl-tRNA hydrolase of Citrobacter koseri (strain ATCC BAA-895 / CDC 4225-83 / SGSC4696).